The primary structure comprises 113 residues: Large ribosomal subunit protein uL22 (113 aa).

This sequence belongs to the universal ribosomal protein uL22 family. In terms of assembly, part of the 50S ribosomal subunit.

This protein binds specifically to 23S rRNA; its binding is stimulated by other ribosomal proteins, e.g. L4, L17, and L20. It is important during the early stages of 50S assembly. It makes multiple contacts with different domains of the 23S rRNA in the assembled 50S subunit and ribosome. In terms of biological role, the globular domain of the protein is located near the polypeptide exit tunnel on the outside of the subunit, while an extended beta-hairpin is found that lines the wall of the exit tunnel in the center of the 70S ribosome. This Xanthomonas axonopodis pv. citri (strain 306) protein is Large ribosomal subunit protein uL22.